A 101-amino-acid chain; its full sequence is Small ribosomal subunit protein uS10 (101 aa).

The protein belongs to the universal ribosomal protein uS10 family. Part of the 30S ribosomal subunit.

In terms of biological role, involved in the binding of tRNA to the ribosomes. The sequence is that of Small ribosomal subunit protein uS10 from Corynebacterium efficiens (strain DSM 44549 / YS-314 / AJ 12310 / JCM 11189 / NBRC 100395).